The primary structure comprises 269 residues: MEDKNSVIVFKNVSFQYQSDASFTLKDVSFNIPKGQWTSIVGHNGSGKSTIAKLMIGIEKVKSGEIFYNNQAITDDNFEKLRKDIGIVFQNPDNQFVGSIVKYDVAFGLENHAVPHDEMHRRVSEALEQVDMLERADYEPNALSGGQKQRVAIASVLALNPSVIILDEATSMLDPDARQNLLDLVRKVKSEHNITIISITHDLSEAMEADHVIVMNKGTVYKEGTATEIFDHAEELTTIGLDLPFPIKINQMLGHQTSFLTYEGLVDQL.

Residues 8–242 (IVFKNVSFQY…AEELTTIGLD (235 aa)) enclose the ABC transporter domain. An ATP-binding site is contributed by 42–49 (GHNGSGKS).

Belongs to the ABC transporter superfamily. Energy-coupling factor EcfA family. In terms of assembly, forms a stable energy-coupling factor (ECF) transporter complex composed of 2 membrane-embedded substrate-binding proteins (S component), 2 ATP-binding proteins (A component) and 2 transmembrane proteins (T component).

It is found in the cell membrane. Functionally, ATP-binding (A) component of a common energy-coupling factor (ECF) ABC-transporter complex. Unlike classic ABC transporters this ECF transporter provides the energy necessary to transport a number of different substrates. This chain is Energy-coupling factor transporter ATP-binding protein EcfA1, found in Staphylococcus aureus (strain MRSA252).